Consider the following 555-residue polypeptide: Efflux pump FUS6 (555 aa).

A disordered region spans residues Met-1–Pro-23. Helical transmembrane passes span Trp-31 to Ile-51, Leu-67 to Ala-87, Ser-97 to His-117, Gly-130 to Ile-150, and Ile-159 to Ala-179. The N-linked (GlcNAc...) asparagine glycan is linked to Asn-181. The next 3 membrane-spanning stretches (helical) occupy residues Trp-186–Leu-206, Trp-225–Gly-245, and Gly-253–Tyr-273. N-linked (GlcNAc...) asparagine glycosylation is present at Asn-291. 6 consecutive transmembrane segments (helical) span residues Leu-297 to Val-317, Val-332 to Ile-352, Val-360 to Asp-380, Ile-393 to Ser-413, Ala-425 to Phe-445, and Lys-501 to Val-521. The N-linked (GlcNAc...) asparagine glycan is linked to Asn-545.

It belongs to the major facilitator superfamily. TCR/Tet family.

It is found in the membrane. Functionally, efflux pump; part of the gene cluster that mediates the biosynthesis of the mycotoxin fusarin C. Within the cluster, FUS1, FUS2, FUS8 and FUS9 are sufficient for fusarin production. The other FUS cluster members are not essential for fusarin C biosynthesis. The sequence is that of Efflux pump FUS6 from Gibberella fujikuroi (strain CBS 195.34 / IMI 58289 / NRRL A-6831) (Bakanae and foot rot disease fungus).